Reading from the N-terminus, the 1031-residue chain is Formin-binding protein 4 (1031 aa).

3 disordered regions span residues 1–102 (MMGK…TTRP), 116–143 (AYAD…NQAT), and 166–205 (APVV…QTPG). Residue S19 is modified to Phosphoserine. 2 stretches are compositionally biased toward low complexity: residues 41-73 (DSTA…APED) and 83-92 (VVEVPNVVQN). Residues S120, S125, and S128 each carry the phosphoserine modification. Residues 134–143 (SKEANGNQAT) show a composition bias toward polar residues. T176 is subject to Phosphothreonine. The segment covering 190-203 (LSPTASNGSDTAQT) has biased composition (polar residues). Residues 218–252 (EIEMGDWQEVWDENTGCYYYWNTQTNEVTWELPQY) enclose the WW 1 domain. K294 bears the N6-acetyllysine mark. K305 participates in a covalent cross-link: Glycyl lysine isopeptide (Lys-Gly) (interchain with G-Cter in SUMO1). A Glycyl lysine isopeptide (Lys-Gly) (interchain with G-Cter in SUMO2) cross-link involves residue K339. A Glycyl lysine isopeptide (Lys-Gly) (interchain with G-Cter in SUMO1); alternate cross-link involves residue K352. Residue K352 forms a Glycyl lysine isopeptide (Lys-Gly) (interchain with G-Cter in SUMO2); alternate linkage. The disordered stretch occupies residues 355 to 518 (DPVSETKETS…KETEVEESSE (164 aa)). Residues 400 to 414 (ESEEEEEEEEQDTLE) are compositionally biased toward acidic residues. Over residues 418 to 430 (ALERKKAELRALE) the composition is skewed to basic and acidic residues. S435, S440, S443, S446, and S450 each carry phosphoserine. The span at 436–450 (VSGSSPRSDISQPAS) shows a compositional bias: polar residues. The segment covering 457 to 466 (IMSKRGKWKM) has biased composition (basic residues). A compositionally biased stretch (low complexity) spans 469 to 482 (RATSPESTSRSSSK). S472, S507, and S516 each carry phosphoserine. The segment covering 499–518 (DSEKIDEISDKETEVEESSE) has biased composition (basic and acidic residues). K527 is covalently cross-linked (Glycyl lysine isopeptide (Lys-Gly) (interchain with G-Cter in SUMO1); alternate). K527 participates in a covalent cross-link: Glycyl lysine isopeptide (Lys-Gly) (interchain with G-Cter in SUMO2); alternate. The region spanning 603–637 (NATPKGWSCHWDRDHRRYFYVNEQSGESQWEFPDG) is the WW 2 domain. Disordered regions lie at residues 629–681 (ESQW…SLCK), 712–813 (PLPL…VQRS), and 900–994 (PAQA…RIEE). Residues 643–663 (SQTKEVRDESLPKLTVKDKTC) are compositionally biased toward basic and acidic residues. A compositionally biased stretch (polar residues) spans 664–677 (TDPNSTESSENPTG). A compositionally biased stretch (pro residues) spans 712-741 (PLPLEMPPPPPPPPESPPPPPPPPPPPPPL). Residues 742–757 (EDGEIQEVEMEDEGSE) show a composition bias toward acidic residues. Over residues 771–794 (KPSTQTTAVTSQSLVDSTASSPPS) the composition is skewed to polar residues. A compositionally biased stretch (pro residues) spans 913 to 939 (VEPPPPPPPPPTPTPPPPPPAPKVPPP). Positions 943-955 (RKGKKDKAKKSKT) are enriched in basic residues. Acidic residues predominate over residues 971 to 984 (LDEEDNSSSSEEDR). A phosphoserine mark is found at S977, S978, and S979. Positions 985 to 994 (ESTAQKRIEE) are enriched in basic and acidic residues.

As to quaternary structure, binds FMN1. Interacts with the Arg/Gly-rich-flanked Pro-rich regions of KHDRBS1/SAM68. Arginine methylation in these regions has no effect on this binding. As to expression, ubiquitous. Highest levels in spleen and thymus.

The polypeptide is Formin-binding protein 4 (Fnbp4) (Mus musculus (Mouse)).